Reading from the N-terminus, the 296-residue chain is NAD kinase (296 aa).

Residue Asp72 is the Proton acceptor of the active site. NAD(+) contacts are provided by residues 72-73 (DG), 146-147 (ND), Arg157, Lys174, Asp176, 187-192 (TAYALS), and Gln247.

Belongs to the NAD kinase family. A divalent metal cation is required as a cofactor.

It is found in the cytoplasm. It carries out the reaction NAD(+) + ATP = ADP + NADP(+) + H(+). Its function is as follows. Involved in the regulation of the intracellular balance of NAD and NADP, and is a key enzyme in the biosynthesis of NADP. Catalyzes specifically the phosphorylation on 2'-hydroxyl of the adenosine moiety of NAD to yield NADP. The chain is NAD kinase from Pseudomonas fluorescens (strain Pf0-1).